We begin with the raw amino-acid sequence, 204 residues long: Synaptosomal-associated protein 25-A (204 aa).

Positions Met-1 to Leu-11 are enriched in basic and acidic residues. The tract at residues Met-1–Ser-25 is disordered. T-SNARE coiled-coil homology domains follow at residues Asp-19 to Leu-81 and Asp-138 to Met-200.

It belongs to the SNAP-25 family.

It localises to the synapse. The protein localises to the synaptosome. Its subcellular location is the cell membrane. Functionally, may play an important role in the synaptic function of specific neuronal systems. Associates with proteins involved in vesicle docking and membrane fusion. The polypeptide is Synaptosomal-associated protein 25-A (snap25a) (Carassius auratus (Goldfish)).